We begin with the raw amino-acid sequence, 96 residues long: Aspartyl/glutamyl-tRNA(Asn/Gln) amidotransferase subunit C (96 aa).

It belongs to the GatC family. Heterotrimer of A, B and C subunits.

The enzyme catalyses L-glutamyl-tRNA(Gln) + L-glutamine + ATP + H2O = L-glutaminyl-tRNA(Gln) + L-glutamate + ADP + phosphate + H(+). It catalyses the reaction L-aspartyl-tRNA(Asn) + L-glutamine + ATP + H2O = L-asparaginyl-tRNA(Asn) + L-glutamate + ADP + phosphate + 2 H(+). Its function is as follows. Allows the formation of correctly charged Asn-tRNA(Asn) or Gln-tRNA(Gln) through the transamidation of misacylated Asp-tRNA(Asn) or Glu-tRNA(Gln) in organisms which lack either or both of asparaginyl-tRNA or glutaminyl-tRNA synthetases. The reaction takes place in the presence of glutamine and ATP through an activated phospho-Asp-tRNA(Asn) or phospho-Glu-tRNA(Gln). This is Aspartyl/glutamyl-tRNA(Asn/Gln) amidotransferase subunit C from Bacillus anthracis (strain A0248).